Reading from the N-terminus, the 221-residue chain is Thymidylate kinase (221 aa).

Gly11–Thr18 is an ATP binding site.

It belongs to the thymidylate kinase family.

It carries out the reaction dTMP + ATP = dTDP + ADP. In terms of biological role, phosphorylation of dTMP to form dTDP in both de novo and salvage pathways of dTTP synthesis. This chain is Thymidylate kinase, found in Lactiplantibacillus plantarum (strain ATCC BAA-793 / NCIMB 8826 / WCFS1) (Lactobacillus plantarum).